The following is a 1454-amino-acid chain: Receptor-type tyrosine-protein phosphatase T (1454 aa).

The N-terminal stretch at Met1–Ala29 is a signal peptide. Residues Gln30–Met770 lie on the Extracellular side of the membrane. The region spanning Gly34–Lys195 is the MAM domain. Asn82, Asn102, Asn141, and Asn212 each carry an N-linked (GlcNAc...) asparagine glycan. The 92-residue stretch at Pro197–Ile288 folds into the Ig-like C2-type domain. A disulfide bridge connects residues Cys217 and Cys271. 3 consecutive Fibronectin type-III domains span residues Pro295–Ala388, Gly393–Asp487, and Val488–Ser594. N-linked (GlcNAc...) asparagine glycans are attached at residues Asn425, Asn514, Asn551, Asn605, Asn658, and Asn688. Residues Ala670–Thr767 form the Fibronectin type-III 4 domain. Residues Ala771 to Ile791 traverse the membrane as a helical segment. Residues Lys792 to Phe1454 are Cytoplasmic-facing. Residues Gln800–Ser852 are disordered. Residues Leu824–Asn841 show a composition bias toward polar residues. 2 consecutive Tyrosine-protein phosphatase domains span residues Phe902 to Ala1156 and Ile1188 to Tyr1450. Substrate-binding positions include Asp1065, Cys1097–Arg1103, and Gln1141. Catalysis depends on Cys1097, which acts as the Phosphocysteine intermediate. Phosphoserine is present on Ser1221. Residue Cys1391 is the Phosphocysteine intermediate of the active site.

Belongs to the protein-tyrosine phosphatase family. Receptor class 2B subfamily. In terms of tissue distribution, expression is restricted to the CNS. Distributed throughout the brain and spinal cord.

Its subcellular location is the membrane. It catalyses the reaction O-phospho-L-tyrosyl-[protein] + H2O = L-tyrosyl-[protein] + phosphate. Functionally, may be involved in both signal transduction and cellular adhesion in the CNS. May have specific signaling roles in the tyrosine phosphorylation/dephosphorylation pathway in the anterior compartment of the adult cerebellar cortex. In Mus musculus (Mouse), this protein is Receptor-type tyrosine-protein phosphatase T (Ptprt).